The primary structure comprises 830 residues: Ribosome biogenesis protein ERB1 (830 aa).

Residues 1-142 (MAPQPLKVGT…NKDLPVDEKL (142 aa)) form a disordered region. 2 stretches are compositionally biased toward acidic residues: residues 35 to 44 (VSEESDEEFG) and 52 to 109 (MSDD…DSDS). The span at 131–142 (EENKDLPVDEKL) shows a compositional bias: basic and acidic residues. WD repeat units follow at residues 481-520 (PGDTRVRSVSTSPDGQWIASGSEDGVVRVWDLGNGREVWR), 523-563 (LHAG…APHI), 660-698 (KTPGTIQRVAFHPSKPHFFAATQRYIRLYDLAAQKLIRT), 701-740 (SGVKWISSMDVHSGGDNLIIGSYDKKLAWFDMDLSAKPYK), 744-783 (YHNRALRSVAYHPTLPLFASASDDGTVHIFHCTVYTDLMQ), and 799-830 (IDGIGVLDLRWVPGKPWLVSSGADGEVRLWCS).

It belongs to the WD repeat BOP1/ERB1 family. In terms of assembly, component of the NOP7 complex, composed of ERB1, NOP7 and YTM1. The complex is held together by ERB1, which interacts with NOP7 via its N-terminal domain and with YTM1 via a high-affinity interaction between the seven-bladed beta-propeller domains of the 2 proteins. The NOP7 complex associates with the 66S pre-ribosome.

Its subcellular location is the nucleus. It localises to the nucleolus. The protein localises to the nucleoplasm. Component of the NOP7 complex, which is required for maturation of the 25S and 5.8S ribosomal RNAs and formation of the 60S ribosome. The sequence is that of Ribosome biogenesis protein ERB1 from Cryptococcus neoformans var. neoformans serotype D (strain JEC21 / ATCC MYA-565) (Filobasidiella neoformans).